Here is a 231-residue protein sequence, read N- to C-terminus: MVDSLRACVFDAYGTLLDVHSAVMRNADEVGASAEALSMLWRQRQLEYSWTRTLMHQYADFWQLTDEALTFALRTYHLEDRKGLKDRLMSAYKELSAYPDAAETLEKLKSAGYIVAILSNGNDEMLQAALKASKLDRVLDSCLSADDLKIYKPDPRIYQFACDRLGVNPNEVCFVSSNAWDLGGAGKFGFNTVRINRQGNPPEYEFAPLKHQVNSLSELWPLLAKNVTKAA.

The active-site Nucleophile is the aspartate 11. An (S)-2-haloacid contacts are provided by residues 12 to 13 (AY), arginine 42, and 119 to 120 (SN). Residues 176 to 181 (SSNAWD) form an important for catalytic activity region.

Belongs to the HAD-like hydrolase superfamily. S-2-haloalkanoic acid dehalogenase family.

It catalyses the reaction an (S)-2-haloacid + H2O = a (2R)-2-hydroxycarboxylate + a halide anion + H(+). The enzyme catalyses (S)-2-chloropropanoate + H2O = (R)-lactate + chloride + H(+). Functionally, catalyzes the hydrolytic dehalogenation of small (S)-2-haloalkanoic acids to yield the corresponding (R)-2-hydroxyalkanoic acids. Acts on acids of short chain lengths, C(2) to C(4), with inversion of configuration at C-3. Active with 2-halogenated carboxylic acids and converts only the S-isomer (or L-isomer) of 2-chloropropionic acid with inversion of configuration to produce R-lactate (or D-isomer). This chain is (S)-2-haloacid dehalogenase 4A, found in Burkholderia cepacia (Pseudomonas cepacia).